Here is a 450-residue protein sequence, read N- to C-terminus: ATP-dependent protease ATPase subunit HslU (450 aa).

Residues Val29, Gly71 to Glu76, Asp261, Glu328, and Arg400 each bind ATP.

It belongs to the ClpX chaperone family. HslU subfamily. A double ring-shaped homohexamer of HslV is capped on each side by a ring-shaped HslU homohexamer. The assembly of the HslU/HslV complex is dependent on binding of ATP.

It localises to the cytoplasm. Its function is as follows. ATPase subunit of a proteasome-like degradation complex; this subunit has chaperone activity. The binding of ATP and its subsequent hydrolysis by HslU are essential for unfolding of protein substrates subsequently hydrolyzed by HslV. HslU recognizes the N-terminal part of its protein substrates and unfolds these before they are guided to HslV for hydrolysis. The chain is ATP-dependent protease ATPase subunit HslU from Rickettsia prowazekii (strain Madrid E).